A 566-amino-acid polypeptide reads, in one-letter code: Intracellular exo-alpha-(1-&gt;5)-L-arabinofuranosidase (566 aa).

The span at 1-12 (MTTHNSQYSAET) shows a compositional bias: polar residues. The disordered stretch occupies residues 1 to 39 (MTTHNSQYSAETTHPDKQESSPAPTAAGTTASNVSTTGN). Residues 20–32 (SSPAPTAAGTTAS) show a composition bias toward low complexity. Residues E69, N114, and N214 each coordinate alpha-L-arabinofuranose. E215 functions as the Proton donor/acceptor in the catalytic mechanism. Alpha-L-arabinofuranose is bound by residues Y286, E340, and Q409. E340 (nucleophile) is an active-site residue.

Belongs to the glycosyl hydrolase 51 family. In terms of assembly, homohexamer; trimer of dimers.

The protein localises to the cytoplasm. It catalyses the reaction Hydrolysis of terminal non-reducing alpha-L-arabinofuranoside residues in alpha-L-arabinosides.. It functions in the pathway glycan metabolism; L-arabinan degradation. Completely inhibited by Hg(2+) and Cu(2+) ions, whereas 1 mM Zn(2+) inhibited activity by 51%. In terms of biological role, involved in the degradation of arabinan and is a key enzyme in the complete degradation of the plant cell wall. Catalyzes the cleavage of terminal alpha-(1-&gt;5)-arabinofuranosyl bonds in different hemicellulosic homopolysaccharides (branched and debranched arabinans). It is active with sugar beet arabinan and wheat arabinoxylan. It also exhibited activity against alpha-(1-&gt;5)-linked arabinobiose, arabinotriose, arabinotetraose, and arabinopentaose. This is Intracellular exo-alpha-(1-&gt;5)-L-arabinofuranosidase (abfB) from Bifidobacterium longum.